The following is a 373-amino-acid chain: Probable protein phosphatase 2C 73 (373 aa).

The region spanning 61-354 (LASLFSKRGE…DDMSVVCLFL (294 aa)) is the PPM-type phosphatase domain. The Mn(2+) site is built by D97, G98, D299, and D345.

Belongs to the PP2C family. The cofactor is Mg(2+). Requires Mn(2+) as cofactor.

It carries out the reaction O-phospho-L-seryl-[protein] + H2O = L-seryl-[protein] + phosphate. The enzyme catalyses O-phospho-L-threonyl-[protein] + H2O = L-threonyl-[protein] + phosphate. The protein is Probable protein phosphatase 2C 73 (PPC6-7) of Arabidopsis thaliana (Mouse-ear cress).